Consider the following 76-residue polypeptide: Mating-type pheromone BBP1(1) (76 aa).

Position 73 is a cysteine methyl ester (cysteine 73). Cysteine 73 carries S-farnesyl cysteine lipidation. The propeptide at 74 to 76 (VVA) is removed in mature form.

It is found in the cell membrane. Its function is as follows. Activates B-regulated development. The polypeptide is Mating-type pheromone BBP1(1) (BBP1(1)) (Schizophyllum commune (Split gill fungus)).